Reading from the N-terminus, the 916-residue chain is Probable serine/threonine-protein kinase DDB_G0267514 (916 aa).

3 disordered regions span residues 283–311, 461–518, and 550–646; these read SGGG…SGGS, NNNQ…SPLD, and FNNQ…EPPS. Composition is skewed to low complexity over residues 461–493 and 550–622; these read NNNQ…QQQP and FNNQ…LINN. The span at 623–646 shows a compositional bias: polar residues; it reads HSPNQYNNQGNILKNSGSVVEPPS. Residues 662–916 form the Protein kinase domain; that stretch reads LKISSKLGEG…EILNLLNEIP (255 aa). ATP is bound by residues 668–676 and lysine 689; that span reads LGEGTFGVV. Aspartate 784 (proton acceptor) is an active-site residue.

The protein belongs to the protein kinase superfamily. TKL Ser/Thr protein kinase family.

The enzyme catalyses L-seryl-[protein] + ATP = O-phospho-L-seryl-[protein] + ADP + H(+). The catalysed reaction is L-threonyl-[protein] + ATP = O-phospho-L-threonyl-[protein] + ADP + H(+). This Dictyostelium discoideum (Social amoeba) protein is Probable serine/threonine-protein kinase DDB_G0267514.